Consider the following 191-residue polypeptide: Pyridoxal 5'-phosphate synthase subunit PdxT (191 aa).

52–54 (GES) contacts L-glutamine. Cys-81 functions as the Nucleophile in the catalytic mechanism. Residues Arg-108 and 136–137 (IR) each bind L-glutamine. Residues His-172 and Glu-174 each act as charge relay system in the active site.

This sequence belongs to the glutaminase PdxT/SNO family. In terms of assembly, in the presence of PdxS, forms a dodecamer of heterodimers. Only shows activity in the heterodimer.

It catalyses the reaction aldehydo-D-ribose 5-phosphate + D-glyceraldehyde 3-phosphate + L-glutamine = pyridoxal 5'-phosphate + L-glutamate + phosphate + 3 H2O + H(+). It carries out the reaction L-glutamine + H2O = L-glutamate + NH4(+). It functions in the pathway cofactor biosynthesis; pyridoxal 5'-phosphate biosynthesis. In terms of biological role, catalyzes the hydrolysis of glutamine to glutamate and ammonia as part of the biosynthesis of pyridoxal 5'-phosphate. The resulting ammonia molecule is channeled to the active site of PdxS. In Actinobacillus pleuropneumoniae serotype 5b (strain L20), this protein is Pyridoxal 5'-phosphate synthase subunit PdxT.